A 310-amino-acid chain; its full sequence is tRNA-dihydrouridine(16) synthase (310 aa).

FMN contacts are provided by residues 7-9 (PMQ) and Gln68. Cys98 (proton donor) is an active-site residue. Residues Lys139, 200–202 (NGE), and 224–225 (GR) contribute to the FMN site.

Belongs to the Dus family. DusC subfamily. FMN is required as a cofactor.

It catalyses the reaction 5,6-dihydrouridine(16) in tRNA + NADP(+) = uridine(16) in tRNA + NADPH + H(+). The catalysed reaction is 5,6-dihydrouridine(16) in tRNA + NAD(+) = uridine(16) in tRNA + NADH + H(+). Functionally, catalyzes the synthesis of 5,6-dihydrouridine (D), a modified base found in the D-loop of most tRNAs, via the reduction of the C5-C6 double bond in target uridines. Specifically modifies U16 in tRNAs. The sequence is that of tRNA-dihydrouridine(16) synthase from Haemophilus influenzae (strain ATCC 51907 / DSM 11121 / KW20 / Rd).